The sequence spans 501 residues: Protein YLS7 (501 aa).

A helical; Signal-anchor for type II membrane protein transmembrane segment spans residues isoleucine 25 to threonine 45. The interval histidine 69–glutamine 131 is disordered. The segment covering proline 78–valine 89 has biased composition (low complexity). Over residues serine 94–glutamate 113 the composition is skewed to basic and acidic residues. The segment covering glutamate 114 to serine 124 has biased composition (polar residues). Positions glycine 211–serine 213 match the GDS motif motif. Residues arginine 438–aspartate 467 are disordered. Residues proline 449–proline 459 show a composition bias toward basic and acidic residues. Positions aspartate 467–asparagine 481 match the DCXHWCLPGXXDXWN motif motif.

It belongs to the PC-esterase family. TBL subfamily. In terms of tissue distribution, expressed in roots, cauline leaves and flowers.

The protein localises to the membrane. May act as a bridging protein that binds pectin and other cell wall polysaccharides. Probably involved in maintaining esterification of pectins. May be involved in the specific O-acetylation of cell wall polymers. In Arabidopsis thaliana (Mouse-ear cress), this protein is Protein YLS7 (YLS7).